A 388-amino-acid polypeptide reads, in one-letter code: Succinate--CoA ligase [ADP-forming] subunit beta (388 aa).

One can recognise an ATP-grasp domain in the interval 9-245 (KELLAKYGLP…KSQENERELK (237 aa)). Residues lysine 46, 53–55 (GRG), glutamate 100, tyrosine 103, and glutamate 108 contribute to the ATP site. 2 residues coordinate Mg(2+): asparagine 200 and aspartate 214. Substrate contacts are provided by residues asparagine 265 and 322-324 (GIV).

Belongs to the succinate/malate CoA ligase beta subunit family. In terms of assembly, heterotetramer of two alpha and two beta subunits. Mg(2+) is required as a cofactor.

The catalysed reaction is succinate + ATP + CoA = succinyl-CoA + ADP + phosphate. It catalyses the reaction GTP + succinate + CoA = succinyl-CoA + GDP + phosphate. The protein operates within carbohydrate metabolism; tricarboxylic acid cycle; succinate from succinyl-CoA (ligase route): step 1/1. Its function is as follows. Succinyl-CoA synthetase functions in the citric acid cycle (TCA), coupling the hydrolysis of succinyl-CoA to the synthesis of either ATP or GTP and thus represents the only step of substrate-level phosphorylation in the TCA. The beta subunit provides nucleotide specificity of the enzyme and binds the substrate succinate, while the binding sites for coenzyme A and phosphate are found in the alpha subunit. The polypeptide is Succinate--CoA ligase [ADP-forming] subunit beta (Laribacter hongkongensis (strain HLHK9)).